The following is a 486-amino-acid chain: Alliin lyase 1 (486 aa).

The first 28 residues, 1–28 (MVESYKKIGSCNKMPCLVILTCIIMSNS), serve as a signal peptide directing secretion. The propeptide occupies 29–38 (LVNNNNMVQA). In terms of domain architecture, EGF-like; atypical spans 51-97 (EAVANINCSEHGRAFLDGIISEGSPKCECNTCYTGPDCSEKIQGCSA). N57 is a glycosylation site (N-linked (GlcNAc...) asparagine). Disulfide bonds link C58–C77, C79–C88, and C82–C95. 130–138 (YFFNPVSNF) provides a ligand contact to chloride. N-linked (GlcNAc...) asparagine glycans are attached at residues N184 and N229. At K289 the chain carries N6-(pyridoxal phosphate)lysine. The N-linked (GlcNAc...) asparagine glycan is linked to N366. C406 and C414 are disulfide-bonded.

It belongs to the alliinase family. As to quaternary structure, homodimer. Pyridoxal 5'-phosphate serves as cofactor. As to expression, expressed in bulb (at protein level). Expressed in shoots.

Its subcellular location is the vacuole. It catalyses the reaction an S-alkyl-L-cysteine S-oxide = an S-alkyl sulfenate + 2-aminoprop-2-enoate. Able to cleave the C-S bond of sulfoxide derivatives of Cys to produce allicin, thus giving rise to all sulfur compounds which are responsible for most of the properties of garlic, such as the specific smell and flavor as well as the health benefits like blood lipid or blood pressure lowering. This is Alliin lyase 1 from Allium sativum (Garlic).